Reading from the N-terminus, the 775-residue chain is Subtilisin-like protease SBT4.1 (775 aa).

The first 23 residues, 1-23, serve as a signal peptide directing secretion; it reads MAIAFHTFLLQLLLFFFASFAEA. N-linked (GlcNAc...) asparagine glycosylation is present at Asn24. Residues 24–106 constitute a propeptide, activation peptide; the sequence is NDSRKTYLVQ…VSRSRNLKLQ (83 aa). Residues 29-105 enclose the Inhibitor I9 domain; sequence TYLVQMKVGG…EVSRSRNLKL (77 aa). The 497-residue stretch at 110–606 folds into the Peptidase S8 domain; that stretch reads SWDFMNLTLK…SGHLNATKVR (497 aa). N-linked (GlcNAc...) asparagine glycans are attached at residues Asn115 and Asn126. The active-site Charge relay system is the Asp136. N-linked (GlcNAc...) asparagine glycosylation is present at Asn162. The active-site Charge relay system is the His196. The region spanning 365 to 459 is the PA domain; sequence FYPLLNEKAP…FLDEQKKGKL (95 aa). An N-linked (GlcNAc...) asparagine glycan is attached at Asn437. Ser551 serves as the catalytic Charge relay system. A glycan (N-linked (GlcNAc...) asparagine) is linked at Asn601.

Belongs to the peptidase S8 family. Post-translationally, the C-terminal propeptide is autocleaved.

It localises to the secreted. This chain is Subtilisin-like protease SBT4.1, found in Arabidopsis thaliana (Mouse-ear cress).